A 346-amino-acid polypeptide reads, in one-letter code: Biotin synthase (346 aa).

The region spanning 38–256 (RQVQVSTLLS…IAVARIMMPT (219 aa)) is the Radical SAM core domain. 3 residues coordinate [4Fe-4S] cluster: cysteine 53, cysteine 57, and cysteine 60. [2Fe-2S] cluster is bound by residues cysteine 97, cysteine 128, cysteine 188, and arginine 260.

The protein belongs to the radical SAM superfamily. Biotin synthase family. As to quaternary structure, homodimer. The cofactor is [4Fe-4S] cluster. Requires [2Fe-2S] cluster as cofactor.

The enzyme catalyses (4R,5S)-dethiobiotin + (sulfur carrier)-SH + 2 reduced [2Fe-2S]-[ferredoxin] + 2 S-adenosyl-L-methionine = (sulfur carrier)-H + biotin + 2 5'-deoxyadenosine + 2 L-methionine + 2 oxidized [2Fe-2S]-[ferredoxin]. It participates in cofactor biosynthesis; biotin biosynthesis; biotin from 7,8-diaminononanoate: step 2/2. In terms of biological role, catalyzes the conversion of dethiobiotin (DTB) to biotin by the insertion of a sulfur atom into dethiobiotin via a radical-based mechanism. The protein is Biotin synthase of Shigella dysenteriae serotype 1 (strain Sd197).